We begin with the raw amino-acid sequence, 553 residues long: Putative transport protein YidE (553 aa).

The next 5 helical transmembrane spans lie at 4–24, 28–48, 65–85, 95–115, and 158–178; these read IALTVSILALVAVVGLFIGNV, GVGLGIGGVLFGGIIVGHFVS, FGLILFVYTIGIQVGPGFFAS, LFAVLIVIIGGLVTAILHKLF, and MSYAMAYPFGICGILFTMWML. 2 RCK C-terminal domains span residues 191 to 276 and 279 to 361; these read QQHE…VIGQ and DTSL…VLGN. A run of 6 helical transmembrane segments spans residues 371–391, 393–413, 439–459, 464–484, 493–513, and 533–553; these read MLPVFIGIGLGVLLGSIPVFV, GFPAALKLGLAGGPLIMALIL, IVLFLSVVGLKSGGDFIHTLV, LSWIGYGALITAVPLITVGIL, YLTMCGMLAGSMTDPPALAFA, and LVMFLRIITPQLLAVLFWSIG.

This sequence belongs to the AAE transporter (TC 2.A.81) family. YidE subfamily.

The protein localises to the cell membrane. In Escherichia coli O127:H6 (strain E2348/69 / EPEC), this protein is Putative transport protein YidE.